The sequence spans 92 residues: uncharacterized protein (92 aa).

To M.jannaschii MJ0782.1.

This is an uncharacterized protein from Methanothermobacter thermautotrophicus (strain ATCC 29096 / DSM 1053 / JCM 10044 / NBRC 100330 / Delta H) (Methanobacterium thermoautotrophicum).